A 530-amino-acid chain; its full sequence is AP-4 complex subunit mu (530 aa).

The segment at Pro-164–Thr-187 is disordered. Low complexity predominate over residues Ser-173–Ser-186. Residues Asp-227 to Arg-527 enclose the MHD domain.

It belongs to the adaptor complexes medium subunit family. May be part of the adaptor protein complex 4 (AP-4), a heterotetramer composed of two large adaptins (epsilon-type subunitand beta-type subunit), a medium adaptin (mu-type subunit) and a small adaptin (sigma-type).

The protein localises to the golgi apparatus. It is found in the trans-Golgi network membrane. It localises to the early endosome. Probable component of an adaptor protein complex. Adaptor protein complexes are vesicle coat components involved both in vesicle formation and cargo selection. They control the vesicular transport of proteins in different trafficking pathways. The chain is AP-4 complex subunit mu (apm4) from Dictyostelium discoideum (Social amoeba).